The primary structure comprises 94 residues: Cell division topological specificity factor (94 aa).

The protein belongs to the MinE family.

Functionally, prevents the cell division inhibition by proteins MinC and MinD at internal division sites while permitting inhibition at polar sites. This ensures cell division at the proper site by restricting the formation of a division septum at the midpoint of the long axis of the cell. This Clostridioides difficile (strain 630) (Peptoclostridium difficile) protein is Cell division topological specificity factor.